The primary structure comprises 297 residues: Light-independent protochlorophyllide reductase iron-sulfur ATP-binding protein (297 aa).

Residues 41-46 (GIGKST) and Lys-70 each bind ATP. Residue Ser-45 coordinates Mg(2+). [4Fe-4S] cluster-binding residues include Cys-126 and Cys-160. ATP is bound by residues 211-212 (NR) and 235-237 (PDL).

It belongs to the NifH/BchL/ChlL family. As to quaternary structure, homodimer. Protochlorophyllide reductase is composed of three subunits; BchL, BchN and BchB. [4Fe-4S] cluster serves as cofactor.

The catalysed reaction is chlorophyllide a + oxidized 2[4Fe-4S]-[ferredoxin] + 2 ADP + 2 phosphate = protochlorophyllide a + reduced 2[4Fe-4S]-[ferredoxin] + 2 ATP + 2 H2O. It participates in porphyrin-containing compound metabolism; bacteriochlorophyll biosynthesis (light-independent). Component of the dark-operative protochlorophyllide reductase (DPOR) that uses Mg-ATP and reduced ferredoxin to reduce ring D of protochlorophyllide (Pchlide) to form chlorophyllide a (Chlide). This reaction is light-independent. The L component serves as a unique electron donor to the NB-component of the complex, and binds Mg-ATP. This chain is Light-independent protochlorophyllide reductase iron-sulfur ATP-binding protein, found in Cereibacter sphaeroides (strain ATCC 17025 / ATH 2.4.3) (Rhodobacter sphaeroides).